The sequence spans 366 residues: 15-cis-zeta-carotene isomerase, chloroplastic (366 aa).

The transit peptide at 1–45 (MASQLRLHLAATPPLLPHRRPHLARPLCPTLNPIRAPLPPLSRVL) directs the protein to the chloroplast. A run of 6 helical transmembrane segments spans residues 94 to 114 (SWAY…VLWI), 136 to 156 (EVVM…MASL), 171 to 191 (VLFA…FINH), 203 to 223 (GITG…FFLY), 260 to 280 (VIWC…AASV), and 338 to 358 (LPYV…PLMQ).

In terms of tissue distribution, expressed in leaves and roots, and at lower levels in embryos and endosperm.

It is found in the plastid. Its subcellular location is the chloroplast membrane. The enzyme catalyses 9,9',15-tri-cis-zeta-carotene = 9,9'-di-cis-zeta-carotene. Its function is as follows. Isomerase involved in the biosynthesis of carotenoids. Catalyzes the cis- to trans-conversion of the 15-cis-bond in 9,15,9'-tri-cis-zeta-carotene. The protein is 15-cis-zeta-carotene isomerase, chloroplastic of Zea mays (Maize).